The chain runs to 761 residues: Pleckstrin homology domain-containing family M member 3 (761 aa).

The residue at position 132 (Ser132) is a Phosphoserine. PH domains follow at residues 211–308 (NILK…EVVH) and 361–456 (NILK…IAAN). The Phorbol-ester/DAG-type zinc finger occupies 669-722 (SHVYSCSLCSQKGFICEICNNGEILYPFEDISTSRCESCGAVFHSECKEKSVPC).

As to quaternary structure, interacts with AKT1.

The protein localises to the cytoplasm. It localises to the golgi apparatus. The protein resides in the cell membrane. Its function is as follows. Involved in skeletal muscle differentiation. May act as a scaffold protein for AKT1 during muscle differentiation. This is Pleckstrin homology domain-containing family M member 3 from Homo sapiens (Human).